The chain runs to 321 residues: tRNA(Ile)-lysidine synthase (321 aa).

30-35 serves as a coordination point for ATP; it reads SGGSDS.

Belongs to the tRNA(Ile)-lysidine synthase family.

Its subcellular location is the cytoplasm. It carries out the reaction cytidine(34) in tRNA(Ile2) + L-lysine + ATP = lysidine(34) in tRNA(Ile2) + AMP + diphosphate + H(+). In terms of biological role, ligates lysine onto the cytidine present at position 34 of the AUA codon-specific tRNA(Ile) that contains the anticodon CAU, in an ATP-dependent manner. Cytidine is converted to lysidine, thus changing the amino acid specificity of the tRNA from methionine to isoleucine. This is tRNA(Ile)-lysidine synthase from Chlamydia trachomatis serovar D (strain ATCC VR-885 / DSM 19411 / UW-3/Cx).